The following is a 500-amino-acid chain: Cytochrome P450 monooxygenase ausI (500 aa).

A helical membrane pass occupies residues 8-28 (LALLGQPLVPGLMVVSAILYL). Cys-440 contacts heme.

This sequence belongs to the cytochrome P450 family. Heme is required as a cofactor.

It localises to the membrane. Its pathway is secondary metabolite biosynthesis; terpenoid biosynthesis. Cytochrome P450 monooxygenase; part of the gene cluster B that mediates the biosynthesis of the fungal meroterpenoid acetoxydehydroaustin. The first step of the pathway is the synthesis of 3,5-dimethylorsellinic acid by the polyketide synthase ausA. 3,5-dimethylorsellinic acid is then prenylated by the polyprenyl transferase ausN. Further epoxidation by the FAD-dependent monooxygenase ausM and cyclization by the probable terpene cyclase ausL lead to the formation of protoaustinoid A. Protoaustinoid A is then oxidized to spiro-lactone preaustinoid A3 by the combined action of the FAD-binding monooxygenases ausB and ausC, and the dioxygenase ausE. Acid-catalyzed keto-rearrangement and ring contraction of the tetraketide portion of preaustinoid A3 by ausJ lead to the formation of preaustinoid A4. The aldo-keto reductase ausK, with the help of ausH, is involved in the next step by transforming preaustinoid A4 into isoaustinone which is in turn hydroxylated by the P450 monooxygenase ausI to form austinolide. The cytochrome P450 monooxygenase ausG then modifies austinolide to austinol. Austinol is further acetylated to austin by the O-acetyltransferase ausP, which spontaneously changes to dehydroaustin. The cytochrome P450 monooxygenase then converts dehydroaustin is into 7-dehydrodehydroaustin. The hydroxylation catalyzed by ausR permits the second O-acetyltransferase ausQ to add an additional acetyl group to the molecule, leading to the formation of acetoxydehydroaustin. Due to genetic rearrangements of the clusters and the subsequent loss of some enzymes, the end product of the Penicillium brasilianum austinoid biosynthesis clusters is acetoxydehydroaustin. This chain is Cytochrome P450 monooxygenase ausI, found in Penicillium brasilianum.